The following is a 347-amino-acid chain: D-alanine--D-alanine ligase (347 aa).

Residues Lys131–Glu333 form the ATP-grasp domain. Glu161–Glu216 is a binding site for ATP. 3 residues coordinate Mg(2+): Asp287, Glu300, and Asn302.

This sequence belongs to the D-alanine--D-alanine ligase family. Mg(2+) serves as cofactor. Mn(2+) is required as a cofactor.

It is found in the cytoplasm. It catalyses the reaction 2 D-alanine + ATP = D-alanyl-D-alanine + ADP + phosphate + H(+). It functions in the pathway cell wall biogenesis; peptidoglycan biosynthesis. Cell wall formation. This is D-alanine--D-alanine ligase from Streptococcus pneumoniae (strain Hungary19A-6).